The sequence spans 418 residues: D-inositol 3-phosphate glycosyltransferase 1 (418 aa).

Residues 24-25 and Gly32 each bind UDP-N-acetyl-alpha-D-glucosamine; that span reads QP. 1D-myo-inositol 3-phosphate is bound by residues 29–34, Lys87, His115, Ser139, and Gln159; that span reads DAGGLN. Residues Arg233 and Lys238 each contribute to the UDP-N-acetyl-alpha-D-glucosamine site. Mg(2+) contacts are provided by Tyr308, Arg309, and Ala311. UDP-N-acetyl-alpha-D-glucosamine is bound by residues Glu321 and Glu329. A Mg(2+)-binding site is contributed by Thr335.

Belongs to the glycosyltransferase group 1 family. MshA subfamily. In terms of assembly, homodimer.

The catalysed reaction is 1D-myo-inositol 3-phosphate + UDP-N-acetyl-alpha-D-glucosamine = 1D-myo-inositol 2-acetamido-2-deoxy-alpha-D-glucopyranoside 3-phosphate + UDP + H(+). In terms of biological role, catalyzes the transfer of a N-acetyl-glucosamine moiety to 1D-myo-inositol 3-phosphate to produce 1D-myo-inositol 2-acetamido-2-deoxy-glucopyranoside 3-phosphate in the mycothiol biosynthesis pathway. This Catenulispora acidiphila (strain DSM 44928 / JCM 14897 / NBRC 102108 / NRRL B-24433 / ID139908) protein is D-inositol 3-phosphate glycosyltransferase 1.